The chain runs to 208 residues: Putative chemokine-related protein FP248 (208 aa).

An N-terminal signal peptide occupies residues 1–23 (MGTGGSLLCGCSLVLSCLCPSAS). An N-linked (GlcNAc...) asparagine glycan is attached at Asn-29.

The protein localises to the secreted. This is Putative chemokine-related protein FP248 from Homo sapiens (Human).